We begin with the raw amino-acid sequence, 163 residues long: Nucleotide-binding protein MUL_0671 (163 aa).

It belongs to the YajQ family.

In terms of biological role, nucleotide-binding protein. This Mycobacterium ulcerans (strain Agy99) protein is Nucleotide-binding protein MUL_0671.